A 312-amino-acid chain; its full sequence is Apolipoprotein E (312 aa).

A signal peptide spans Met-1–Ala-18. A run of 8 repeats spans residues Val-72–Gly-93, Pro-94–Gly-115, Ala-116–Gly-137, Gln-138–Met-159, Arg-160–Glu-181, Arg-182–Ala-203, Asn-204–Arg-225, and Gly-226–Glu-247. The tract at residues Val-72 to Glu-247 is 8 X 22 AA approximate tandem repeats. At Met-135 the chain carries Methionine sulfoxide. The residue at position 139 (Ser-139) is a Phosphoserine. The LDL and other lipoprotein receptors binding stretch occupies residues His-150–Arg-160. Residues His-150 to Arg-160 form an LDL receptor binding region. Met-154 to Arg-157 lines the heparin pocket. Residues Thr-202–Met-282 form a lipid-binding and lipoprotein association region. Ser-221–Leu-228 contributes to the heparin binding site. Positions Gln-258–Gln-312 are homooligomerization. Residues Arg-270 to Met-282 form a specificity for association with VLDL region.

Belongs to the apolipoprotein A1/A4/E family. In terms of assembly, homotetramer. May interact with ABCA1; functionally associated with ABCA1 in the biogenesis of HDLs. May interact with APP/A4 amyloid-beta peptide; the interaction is extremely stable in vitro but its physiological significance is unclear. May interact with MAPT. May interact with MAP2. In the cerebrospinal fluid, interacts with secreted SORL1. Interacts with PMEL; this allows the loading of PMEL luminal fragment on ILVs to induce fibril nucleation. Post-translationally, APOE exists as multiple glycosylated and sialylated glycoforms within cells and in plasma. The extent of glycosylation and sialylation are tissue and context specific. In terms of processing, glycated in plasma VLDL. Phosphorylated by FAM20C in the extracellular medium.

Its subcellular location is the secreted. It is found in the extracellular space. The protein localises to the extracellular matrix. The protein resides in the extracellular vesicle. It localises to the endosome. Its subcellular location is the multivesicular body. APOE is an apolipoprotein, a protein associating with lipid particles, that mainly functions in lipoprotein-mediated lipid transport between organs via the plasma and interstitial fluids. APOE is a core component of plasma lipoproteins and is involved in their production, conversion and clearance. Apolipoproteins are amphipathic molecules that interact both with lipids of the lipoprotein particle core and the aqueous environment of the plasma. As such, APOE associates with chylomicrons, chylomicron remnants, very low density lipoproteins (VLDL) and intermediate density lipoproteins (IDL) but shows a preferential binding to high-density lipoproteins (HDL). It also binds a wide range of cellular receptors including the LDL receptor/LDLR, the LDL receptor-related proteins LRP1, LRP2 and LRP8 and the very low-density lipoprotein receptor/VLDLR that mediate the cellular uptake of the APOE-containing lipoprotein particles. Finally, APOE also has a heparin-binding activity and binds heparan-sulfate proteoglycans on the surface of cells, a property that supports the capture and the receptor-mediated uptake of APOE-containing lipoproteins by cells. A main function of APOE is to mediate lipoprotein clearance through the uptake of chylomicrons, VLDLs, and HDLs by hepatocytes. APOE is also involved in the biosynthesis by the liver of VLDLs as well as their uptake by peripheral tissues ensuring the delivery of triglycerides and energy storage in muscle, heart and adipose tissues. By participating in the lipoprotein-mediated distribution of lipids among tissues, APOE plays a critical role in plasma and tissues lipid homeostasis. APOE is also involved in two steps of reverse cholesterol transport, the HDLs-mediated transport of cholesterol from peripheral tissues to the liver, and thereby plays an important role in cholesterol homeostasis. First, it is functionally associated with ABCA1 in the biogenesis of HDLs in tissues. Second, it is enriched in circulating HDLs and mediates their uptake by hepatocytes. APOE also plays an important role in lipid transport in the central nervous system, regulating neuron survival and sprouting. This chain is Apolipoprotein E (Apoe), found in Rattus rattus (Black rat).